We begin with the raw amino-acid sequence, 91 residues long: Uteroglobin (91 aa).

A signal peptide spans 1–21; the sequence is MKLTIAIVLVTLTLFCRPAST.

Belongs to the secretoglobin family. Antiparallel homodimer; disulfide-linked. Interaction with LMBR1L is controversial.

It localises to the secreted. Functionally, binds phosphatidylcholine, phosphatidylinositol, polychlorinated biphenyls (PCB) and weakly progesterone, potent inhibitor of phospholipase A2. This is Uteroglobin (SCGB1A1) from Bos taurus (Bovine).